Consider the following 371-residue polypeptide: Putative glutamate--cysteine ligase 2 (371 aa).

It belongs to the glutamate--cysteine ligase type 2 family. YbdK subfamily.

It carries out the reaction L-cysteine + L-glutamate + ATP = gamma-L-glutamyl-L-cysteine + ADP + phosphate + H(+). Its function is as follows. ATP-dependent carboxylate-amine ligase which exhibits weak glutamate--cysteine ligase activity. In Nitrosospira multiformis (strain ATCC 25196 / NCIMB 11849 / C 71), this protein is Putative glutamate--cysteine ligase 2.